Consider the following 329-residue polypeptide: MSIEFNALNFKKVALAAQDKLPKLALINLDDWGLITLIGDDKKSYLQGQVTCDVVSLPINASIFGAHCDAKGKMRTIFRLFNHNEGYGFLQRKSVMEIQLPELKKYAVFSKVDIEASSDVLLGLSGEQAQAVVEQHFPGDGDVRVITAGTAIKVDDDRWLFAIAPEQAEQLINTLVETHNNVQLSDSTLWDLYDVLYAIPRIDAVTALEFIPQAVNLQAVDGISFKKGCYTGQETVARAKYRGINKRAMYIVTGEATQFPFTGDALERSVGDNWRKGGTLLASYLYADGQAIALVVLPNDLDEATQFRLADQPEAIWTQLDLPYSLDDK.

The folate site is built by tryptophan 32 and tryptophan 190.

The protein belongs to the tRNA-modifying YgfZ family.

It is found in the cytoplasm. In terms of biological role, folate-binding protein involved in regulating the level of ATP-DnaA and in the modification of some tRNAs. It is probably a key factor in regulatory networks that act via tRNA modification, such as initiation of chromosomal replication. The sequence is that of tRNA-modifying protein YgfZ from Photobacterium profundum (strain SS9).